The following is a 227-amino-acid chain: Lectin (227 aa).

A signal peptide spans 1-28; sequence MTMTSTTTKAMAMAAAVLAAAAVAATNA. The residue at position 29 (Q29) is a Pyrrolidone carboxylic acid. Chitin-binding type-1 domains follow at residues 29 to 70, 71 to 113, 114 to 156, and 157 to 199; these read QTCG…ACCS, SQRC…PCRA, DIKC…ACCP, and EKRC…GCYK. Intrachain disulfides connect C31–C46, C40–C52, C45–C59, C63–C68, C74–C89, C83–C95, C88–C102, C106–C111, C117–C132, C126–C138, C131–C145, C149–C154, C160–C175, C169–C181, C174–C188, and C192–C197. 38–40 serves as a coordination point for substrate; that stretch reads MIC. 90–101 is a substrate binding site; it reads SQYGYCGFGSEY. 142–143 contributes to the substrate binding site; that stretch reads SE. The propeptide occupies 202-227; sequence DGMAAILANNQSVSFEGIIESVAELV. N211 carries N-linked (GlcNAc...) asparagine glycosylation.

As to expression, confined to root caps, several cell layers at the periphery of the coleorhiza and radicle, and in all cell layers of the coleoptile.

Functionally, N-acetyl-D-glucosamine binding lectin. The chain is Lectin from Oryza sativa subsp. japonica (Rice).